Reading from the N-terminus, the 341-residue chain is Anthranilate phosphoribosyltransferase (341 aa).

5-phospho-alpha-D-ribose 1-diphosphate is bound by residues G84, 87–88, T92, 94–97, 112–120, and S124; these read GD, NIST, and KHGNRSVSS. Residue G84 participates in anthranilate binding. S96 provides a ligand contact to Mg(2+). Residue N115 participates in anthranilate binding. Anthranilate is bound at residue R170. Residues D229 and E230 each contribute to the Mg(2+) site.

It belongs to the anthranilate phosphoribosyltransferase family. In terms of assembly, homodimer. Mg(2+) is required as a cofactor.

The enzyme catalyses N-(5-phospho-beta-D-ribosyl)anthranilate + diphosphate = 5-phospho-alpha-D-ribose 1-diphosphate + anthranilate. It participates in amino-acid biosynthesis; L-tryptophan biosynthesis; L-tryptophan from chorismate: step 2/5. Functionally, catalyzes the transfer of the phosphoribosyl group of 5-phosphorylribose-1-pyrophosphate (PRPP) to anthranilate to yield N-(5'-phosphoribosyl)-anthranilate (PRA). The protein is Anthranilate phosphoribosyltransferase of Polynucleobacter necessarius subsp. necessarius (strain STIR1).